Reading from the N-terminus, the 1178-residue chain is DNA-directed RNA polymerase subunit beta' (1178 aa).

Zn(2+)-binding residues include Cys-60, Cys-62, Cys-75, and Cys-78. Positions 450, 452, and 454 each coordinate Mg(2+). Cys-795, Cys-869, Cys-876, and Cys-879 together coordinate Zn(2+).

Belongs to the RNA polymerase beta' chain family. As to quaternary structure, the RNAP catalytic core consists of 2 alpha, 1 beta, 1 beta' and 1 omega subunit. When a sigma factor is associated with the core the holoenzyme is formed, which can initiate transcription. The cofactor is Mg(2+). Zn(2+) serves as cofactor.

It carries out the reaction RNA(n) + a ribonucleoside 5'-triphosphate = RNA(n+1) + diphosphate. Functionally, DNA-dependent RNA polymerase catalyzes the transcription of DNA into RNA using the four ribonucleoside triphosphates as substrates. The polypeptide is DNA-directed RNA polymerase subunit beta' (Clostridium botulinum (strain Loch Maree / Type A3)).